We begin with the raw amino-acid sequence, 303 residues long: Peroxisomal trans-2-enoyl-CoA reductase (303 aa).

Residue 23 to 47 coordinates NADP(+); the sequence is VTGGATGIGKAIVKELLELGSNVVI. Residue Lys32 is modified to N6-succinyllysine. Residue Ser49 is modified to Phosphoserine. Tyr179 acts as the Proton acceptor in catalysis. At Tyr179 the chain carries Phosphotyrosine. The Microbody targeting signal signature appears at 301–303; that stretch reads AKL.

The protein belongs to the short-chain dehydrogenases/reductases (SDR) family. In terms of assembly, interacts with PEX5, probably required to target it into peroxisomes.

It localises to the peroxisome. It carries out the reaction a (2E)-enoyl-CoA + NADPH + H(+) = a 2,3-saturated acyl-CoA + NADP(+). The catalysed reaction is (2E)-hexenoyl-CoA + NADPH + H(+) = hexanoyl-CoA + NADP(+). The enzyme catalyses (2E)-octenoyl-CoA + NADPH + H(+) = octanoyl-CoA + NADP(+). It catalyses the reaction (2E)-decenoyl-CoA + NADPH + H(+) = decanoyl-CoA + NADP(+). It carries out the reaction (2E)-dodecenoyl-CoA + NADPH + H(+) = dodecanoyl-CoA + NADP(+). The catalysed reaction is (2E)-tetradecenoyl-CoA + NADPH + H(+) = tetradecanoyl-CoA + NADP(+). Its pathway is lipid metabolism; fatty acid biosynthesis. In terms of biological role, participates in chain elongation of fatty acids. Catalyzes the reduction of trans-2-enoyl-CoAs of varying chain lengths from 6:1 to 16:1, having maximum activity with 10:1 CoA. Has no 2,4-dienoyl-CoA reductase activity. This is Peroxisomal trans-2-enoyl-CoA reductase (PECR) from Pongo abelii (Sumatran orangutan).